The following is a 433-amino-acid chain: uncharacterized protein (433 aa).

Residues 36 to 58 form a helical membrane-spanning segment; the sequence is YYYYVQLAFKMLVGVLKNLPVVY. Positions 169-433 are disordered; it reads VRVPSRDLQP…GEGRDLPEDN (265 aa). Acidic residues-rich tracts occupy residues 216–227 and 234–254; these read GEPGENGDESDE and GDEDAAQSEQNNDDGMDYESD. 3 stretches are compositionally biased toward basic and acidic residues: residues 265–280, 354–364, and 422–433; these read EPDRRHDAEAGERGSE, GGRRPARRDSP, and RRGEGRDLPEDN.

It is found in the host membrane. This is an uncharacterized protein from Psittacid herpesvirus 1 (isolate Amazon parrot/-/97-0001/1997) (PsHV-1).